A 267-amino-acid chain; its full sequence is Putative hydro-lyase Arth_3576 (267 aa).

It belongs to the D-glutamate cyclase family.

The polypeptide is Putative hydro-lyase Arth_3576 (Arthrobacter sp. (strain FB24)).